Consider the following 226-residue polypeptide: Ribonuclease 3 (226 aa).

The region spanning Ile6–Asp128 is the RNase III domain. Glu41 contributes to the Mg(2+) binding site. Asp45 is a catalytic residue. 2 residues coordinate Mg(2+): Asp114 and Glu117. Glu117 is an active-site residue. In terms of domain architecture, DRBM spans Asp155 to Leu225.

It belongs to the ribonuclease III family. Homodimer. Mg(2+) serves as cofactor.

It is found in the cytoplasm. It carries out the reaction Endonucleolytic cleavage to 5'-phosphomonoester.. Digests double-stranded RNA. Involved in the processing of primary rRNA transcript to yield the immediate precursors to the large and small rRNAs (23S and 16S). Processes some mRNAs, and tRNAs when they are encoded in the rRNA operon. Processes pre-crRNA and tracrRNA of type II CRISPR loci if present in the organism. This chain is Ribonuclease 3, found in Photorhabdus laumondii subsp. laumondii (strain DSM 15139 / CIP 105565 / TT01) (Photorhabdus luminescens subsp. laumondii).